The sequence spans 337 residues: Phenylalanine--tRNA ligase alpha subunit (337 aa).

Glutamate 252 is a Mg(2+) binding site.

This sequence belongs to the class-II aminoacyl-tRNA synthetase family. Phe-tRNA synthetase alpha subunit type 1 subfamily. In terms of assembly, tetramer of two alpha and two beta subunits. The cofactor is Mg(2+).

It localises to the cytoplasm. The catalysed reaction is tRNA(Phe) + L-phenylalanine + ATP = L-phenylalanyl-tRNA(Phe) + AMP + diphosphate + H(+). This Cellvibrio japonicus (strain Ueda107) (Pseudomonas fluorescens subsp. cellulosa) protein is Phenylalanine--tRNA ligase alpha subunit.